A 1231-amino-acid polypeptide reads, in one-letter code: STE20-like serine/threonine-protein kinase (1231 aa).

Ser-14 is subject to Phosphoserine. A Protein kinase domain is found at 34–292; that stretch reads WETIGELGDG…TSQLLQHPFV (259 aa). ATP is bound by residues 40–48 and Lys-63; that span reads LGDGAFGKV. Catalysis depends on Asp-155, which acts as the Proton acceptor. Thr-183 carries the post-translational modification Phosphothreonine. Ser-189 carries the post-translational modification Phosphoserine. A disordered region spans residues 309-351; the sequence is AEVTEEVEDGKEEDDDEEIENSLPIPTNKRASSDLSIASSEED. Residues 312–328 show a composition bias toward acidic residues; it reads TEEVEDGKEEDDDEEIE. A phosphoserine mark is found at Ser-330, Ser-340, Ser-341, Ser-344, Ser-347, Ser-348, Ser-354, and Ser-372. Residues 337–347 show a composition bias toward polar residues; the sequence is KRASSDLSIAS. Positions 405–478 are disordered; sequence PDRATELPES…KQPVLENKLV (74 aa). Basic and acidic residues-rich tracts occupy residues 407–428 and 446–478; these read RATE…RLPD and DHAV…NKLV. The residue at position 507 (Ser-507) is a Phosphoserine. A compositionally biased stretch (basic and acidic residues) spans 516 to 531; it reads THEKLRKDDTTQKDVI. A disordered region spans residues 516 to 757; sequence THEKLRKDDT…TGSTADNSSI (242 aa). A phosphoserine mark is found at Ser-536 and Ser-554. Over residues 601 to 613 the composition is skewed to basic and acidic residues; it reads TDQKLVENTHEKQ. A compositionally biased stretch (polar residues) spans 615–624; it reads PISSETTLDT. Residues Ser-641 and Ser-661 each carry the phosphoserine modification. The segment covering 641–660 has biased composition (acidic residues); that stretch reads STEEVEVEGAVSETDEEDVQ. The span at 683-692 shows a compositional bias: low complexity; that stretch reads EAPAQVEVQV. Residues 693-706 are compositionally biased toward pro residues; the sequence is PVPPQPSEPPPAPI. Ser-775 is modified (phosphoserine). Thr-810 carries the phosphothreonine modification. Ser-814 carries the post-translational modification Phosphoserine. Residues 822-1065 are a coiled coil; sequence LRRQELRELR…LKNRQTQERA (244 aa). The UVR domain occupies 871 to 906; it reads DQEIENLEKQQKQTIERLEQEHTNRLRDEAKRIKGE. The residue at position 1093 (Thr-1093) is a Phosphothreonine. Residues 1105–1179 adopt a coiled-coil conformation; sequence SAQEEKRQKN…ELKEWREKLR (75 aa).

It belongs to the protein kinase superfamily. STE Ser/Thr protein kinase family. STE20 subfamily. In terms of processing, proteolytically cleaved by caspase-3. Post-translationally, autophosphorylated. Ubiquitously expressed.

It localises to the cytoplasm. The enzyme catalyses L-seryl-[protein] + ATP = O-phospho-L-seryl-[protein] + ADP + H(+). It carries out the reaction L-threonyl-[protein] + ATP = O-phospho-L-threonyl-[protein] + ADP + H(+). In terms of biological role, mediates apoptosis and actin stress fiber dissolution. The chain is STE20-like serine/threonine-protein kinase (SLK) from Cavia porcellus (Guinea pig).